Consider the following 215-residue polypeptide: Pyrrolidone-carboxylate peptidase (215 aa).

Residues Glu-81, Cys-144, and His-168 contribute to the active site.

It belongs to the peptidase C15 family. As to quaternary structure, homotetramer.

It localises to the cytoplasm. The catalysed reaction is Release of an N-terminal pyroglutamyl group from a polypeptide, the second amino acid generally not being Pro.. Its function is as follows. Removes 5-oxoproline from various penultimate amino acid residues except L-proline. This Bacillus subtilis (strain 168) protein is Pyrrolidone-carboxylate peptidase (pcp).